The primary structure comprises 339 residues: MAQEIYDIAIIGGGPVGMFAAFYAGLRDTKVILLESLATLGGQVTSLYPEKTILDVAGFSATKGTDFIAALSQQLQRFPVDIRTQTTVVNLEKSGNLFTVTTNNGTFIQAKTVIVATGKGAFEPRKIQVAGVDNLVGQGVHYFIKNKHDFDNHHIAIAGGGDSAVDMATMLSHIAAETTLIHRRDNFRAMEQSVKTLMASKVIRETPKKILSVSKQPDGRLKLRLAHVKDNQQVNDIIVDDLIINYGFISENKTIQAWAVQPKLAGQVFAVNQTLETNVPGLFVIGDASHYIGKADLIAIGLGEAPSAVNAAIRCFDPNRGGPGHSSSMVLKDTIVRND.

FAD-binding residues include E35, Q43, Y48, V88, F122, D287, and S327.

This sequence belongs to the ferredoxin--NADP reductase type 2 family. As to quaternary structure, homodimer. FAD serves as cofactor.

The enzyme catalyses 2 reduced [2Fe-2S]-[ferredoxin] + NADP(+) + H(+) = 2 oxidized [2Fe-2S]-[ferredoxin] + NADPH. The protein is Ferredoxin--NADP reductase of Leuconostoc citreum (strain KM20).